Here is a 549-residue protein sequence, read N- to C-terminus: Membrane protein insertase YidC (549 aa).

The chain crosses the membrane as a helical span at residues 8 to 28 (VLLATVLSVAVLIVWQFVFPS). The span at 29 to 39 (PKPKPQPPKPP) shows a compositional bias: pro residues. The disordered stretch occupies residues 29–68 (PKPKPQPPKPPEAAQRAEAPAAPAPGQPAAQAPAPAVPQD). Low complexity-rich tracts occupy residues 40 to 49 (EAAQRAEAPA) and 55 to 68 (QPAA…VPQD). Transmembrane regions (helical) follow at residues 328 to 348 (IDYG…LFVM), 354 to 374 (LVAN…VLLY), 424 to 444 (LGGC…YATL), and 502 to 522 (PGFF…YIFV).

It belongs to the OXA1/ALB3/YidC family. Type 1 subfamily. Interacts with the Sec translocase complex via SecD. Specifically interacts with transmembrane segments of nascent integral membrane proteins during membrane integration.

The protein resides in the cell inner membrane. Functionally, required for the insertion and/or proper folding and/or complex formation of integral membrane proteins into the membrane. Involved in integration of membrane proteins that insert both dependently and independently of the Sec translocase complex, as well as at least some lipoproteins. Aids folding of multispanning membrane proteins. The chain is Membrane protein insertase YidC from Anaeromyxobacter sp. (strain Fw109-5).